The following is a 106-amino-acid chain: uncharacterized protein (106 aa).

The next 2 helical transmembrane spans lie at 17–37 (AGLLMTISLAKSFSFAIAVLV) and 55–75 (FSSSYVFLYFIVICRLRFMIF).

The protein resides in the membrane. This is an uncharacterized protein from Saccharomyces cerevisiae (strain ATCC 204508 / S288c) (Baker's yeast).